A 390-amino-acid polypeptide reads, in one-letter code: S-adenosylmethionine synthase 4 (390 aa).

Glutamate 9 contacts Mg(2+). Histidine 15 provides a ligand contact to ATP. A K(+)-binding site is contributed by glutamate 43. Glutamate 56 and glutamine 99 together coordinate L-methionine. ATP contacts are provided by residues 167–169 (DGK), 235–238 (SGRF), aspartate 246, 252–253 (RK), alanine 269, lysine 273, and lysine 277. An L-methionine-binding site is contributed by aspartate 246. Residue lysine 277 participates in L-methionine binding.

The protein belongs to the AdoMet synthase family. As to quaternary structure, homotetramer. It depends on Mn(2+) as a cofactor. Mg(2+) is required as a cofactor. Co(2+) serves as cofactor. Requires K(+) as cofactor. Mostly expressed in flowers, seedpods and roots, and, to a lower extent, in stems and leaves.

It is found in the cytoplasm. It carries out the reaction L-methionine + ATP + H2O = S-adenosyl-L-methionine + phosphate + diphosphate. It functions in the pathway amino-acid biosynthesis; S-adenosyl-L-methionine biosynthesis; S-adenosyl-L-methionine from L-methionine: step 1/1. Its function is as follows. Catalyzes the formation of S-adenosylmethionine from methionine and ATP. The reaction comprises two steps that are both catalyzed by the same enzyme: formation of S-adenosylmethionine (AdoMet) and triphosphate, and subsequent hydrolysis of the triphosphate. The sequence is that of S-adenosylmethionine synthase 4 (MSAMS4) from Brassica juncea (Indian mustard).